The following is a 253-amino-acid chain: Probable transcriptional regulatory protein RPR_05505 (253 aa).

The protein belongs to the TACO1 family.

It is found in the cytoplasm. This Rickettsia peacockii (strain Rustic) protein is Probable transcriptional regulatory protein RPR_05505.